Reading from the N-terminus, the 648-residue chain is Actin-related protein 5 (648 aa).

The segment at 34–59 (LTKPRKDRKKEAAASEGSASQTTVEQ) is disordered. Coiled-coil stretches lie at residues 277–311 (TAEQKQEKRRELAHRLLDIKKNREQEKLREDEQQL) and 340–364 (TLEDLDSLIATINSRIKRAQERAQS). Disordered regions lie at residues 357–385 (RAQERAQSGPRPSKQQERLNKMPKPPEGM) and 403–455 (GRKQ…GMND). Positions 414–428 (EQAKRHTHAAQERMR) are enriched in basic and acidic residues. Phosphoserine is present on residues S471 and S473.

Belongs to the actin family. ARP5 subfamily. As to quaternary structure, component of the chromatin remodeling Ino80 complex.

The protein localises to the nucleus. Proposed core component of the chromatin remodeling Ino80 complex which is involved in transcriptional regulation, DNA replication and probably DNA repair. The sequence is that of Actin-related protein 5 from Drosophila melanogaster (Fruit fly).